The primary structure comprises 262 residues: Protein NEGATIVE GRAVITROPIC RESPONSE OF ROOTS (262 aa).

Positions Met-1 to Trp-40 are disordered. Positions Ser-43–Thr-49 match the IGT motif motif.

This sequence belongs to the LAZY family.

Functionally, involved in the control of root gravitropism. The sequence is that of Protein NEGATIVE GRAVITROPIC RESPONSE OF ROOTS from Medicago truncatula (Barrel medic).